An 857-amino-acid chain; its full sequence is Envelope glycoprotein gp160 (857 aa).

Residues 1–26 (MAHTSNHLFILLLLISVYGFLGHKKN) form the signal peptide. Residues 27 to 682 (YVTVFYGIPA…FTSWMAYIRL (656 aa)) lie on the Extracellular side of the membrane. Asn-39 is a glycosylation site (N-linked (GlcNAc...) asparagine; by host). Residues Cys-46 and Cys-59 are joined by a disulfide bond. N-linked (GlcNAc...) asparagine; by host glycosylation is found at Asn-72, Asn-81, Asn-116, Asn-121, Asn-142, Asn-150, Asn-167, Asn-193, Asn-205, Asn-237, Asn-240, Asn-271, Asn-277, Asn-288, Asn-299, Asn-309, Asn-364, Asn-397, Asn-407, Asn-447, Asn-464, and Asn-469. Cystine bridges form between Cys-103–Cys-213, Cys-110–Cys-204, Cys-115–Cys-164, Cys-226–Cys-256, and Cys-236–Cys-248. Residues 115–163 (CNNTGTNTTTKPITTPITTTKPSENLLNDTSPCIKNDTCPGIGLENTVD) form a V1 region. The segment at 164–204 (CYFNMTGLRRDEKKQYKDTWYEKDLECNGNSTSTICYMRTC) is V2. Positions 304–336 (CRRPGNKTVIPITIMSGLNFHSQPLNTRPRQAW) are V3. The cysteines at positions 304 and 337 are disulfide-linked. Cystine bridges form between Cys-389-Cys-446 and Cys-396-Cys-419. A V4 region spans residues 396–419 (CNMTWFLNWVENRTGTTQKNYVTC). Positions 464-472 (NDTKTNITM) are V5. The tract at residues 515–535 (GVMVLGFLGLLAMAGSAMGAT) is fusion peptide. The tract at residues 578–594 (LQTRVTAIEKYLKDQAL) is immunosuppression. Residues Asn-614, Asn-623, and Asn-639 are each glycosylated (N-linked (GlcNAc...) asparagine; by host). Positions 627-648 (QQWEKRVNFLDANITALLEEAQ) form a coiled coil. Positions 660–681 (KLNSWDVFGNWFDFTSWMAYIR) are MPER; binding to GalCer. Residues 683–703 (GLYVVAGLIVLRIVIYIMQML) form a helical membrane-spanning segment. Residues 704-857 (ARLRKGYRPV…IRQGLELALL (154 aa)) are Cytoplasmic-facing. The short motif at 710 to 713 (YRPV) is the YXXV motif; contains endocytosis signal element. Cys-776 is lipidated: S-palmitoyl cysteine; by host. A Di-leucine internalization motif motif is present at residues 856-857 (LL).

The mature envelope protein (Env) consists of a homotrimer of non-covalently associated gp120-gp41 heterodimers. The resulting complex protrudes from the virus surface as a spike. There seems to be as few as 10 spikes on the average virion. Interacts with human CD4, CCR5 and CXCR4, to form a P4HB/PDI-CD4-CXCR4-gp120 complex. Gp120 also interacts with the C-type lectins CD209/DC-SIGN and CLEC4M/DC-SIGNR (collectively referred to as DC-SIGN(R)). Gp120 and gp41 interact with GalCer. As to quaternary structure, the mature envelope protein (Env) consists of a homotrimer of non-covalently associated gp120-gp41 heterodimers. The resulting complex protrudes from the virus surface as a spike. There seems to be as few as 10 spikes on the average virion. In terms of processing, specific enzymatic cleavages in vivo yield mature proteins. Envelope glycoproteins are synthesized as an inactive precursor that is heavily N-glycosylated and processed likely by host cell furin in the Golgi to yield the mature SU and TM proteins. The cleavage site between SU and TM requires the minimal sequence [KR]-X-[KR]-R. Post-translationally, palmitoylation of the transmembrane protein and of Env polyprotein (prior to its proteolytic cleavage) is essential for their association with host cell membrane lipid rafts. Palmitoylation is therefore required for envelope trafficking to classical lipid rafts, but not for viral replication.

It is found in the virion membrane. The protein resides in the host cell membrane. It localises to the host endosome membrane. The surface protein gp120 (SU) attaches the virus to the host lymphoid cell by binding to the primary receptor CD4. This interaction induces a structural rearrangement creating a high affinity binding site for a chemokine coreceptor like CXCR4 and/or CCR5. This peculiar 2 stage receptor-interaction strategy allows gp120 to maintain the highly conserved coreceptor-binding site in a cryptic conformation, protected from neutralizing antibodies. Since CD4 also displays a binding site for the disulfide-isomerase P4HB/PDI, a P4HB/PDI-CD4-CXCR4-gp120 complex may form. In that complex, P4HB/PDI could reach and reduce gp120 disulfide bonds, causing major conformational changes in gp120. TXN, another PDI family member could also be involved in disulfide rearrangements in Env during fusion. These changes are transmitted to the transmembrane protein gp41 and are thought to activate its fusogenic potential by unmasking its fusion peptide. Functionally, the surface protein gp120 is a ligand for CD209/DC-SIGN and CLEC4M/DC-SIGNR, which are respectively found on dendritic cells (DCs), and on endothelial cells of liver sinusoids and lymph node sinuses. These interactions allow capture of viral particles at mucosal surfaces by these cells and subsequent transmission to permissive cells. DCs are professional antigen presenting cells, critical for host immunity by inducing specific immune responses against a broad variety of pathogens. They act as sentinels in various tissues where they take up antigen, process it, and present it to T-cells following migration to lymphoid organs. HIV subverts the migration properties of dendritic cells to gain access to CD4+ T-cells in lymph nodes. Virus transmission to permissive T-cells occurs either in trans (without DCs infection, through viral capture and transmission), or in cis (following DCs productive infection, through the usual CD4-gp120 interaction), thereby inducing a robust infection. In trans infection, bound virions remain infectious over days and it is proposed that they are not degraded, but protected in non-lysosomal acidic organelles within the DCs close to the cell membrane thus contributing to the viral infectious potential during DCs' migration from the periphery to the lymphoid tissues. On arrival at lymphoid tissues, intact virions recycle back to DCs' cell surface allowing virus transmission to CD4+ T-cells. Virion capture also seems to lead to MHC-II-restricted viral antigen presentation, and probably to the activation of HIV-specific CD4+ cells. Its function is as follows. The transmembrane protein gp41 (TM) acts as a class I viral fusion protein. Under the current model, the protein has at least 3 conformational states: pre-fusion native state, pre-hairpin intermediate state, and post-fusion hairpin state. During fusion of viral and target intracellular membranes, the coiled coil regions (heptad repeats) assume a trimer-of-hairpins structure, positioning the fusion peptide in close proximity to the C-terminal region of the ectodomain. The formation of this structure appears to drive apposition and subsequent fusion of viral and target cell membranes. Complete fusion occurs in host cell endosomes and is dynamin-dependent, however some lipid transfer might occur at the plasma membrane. The virus undergoes clathrin-dependent internalization long before endosomal fusion, thus minimizing the surface exposure of conserved viral epitopes during fusion and reducing the efficacy of inhibitors targeting these epitopes. Membranes fusion leads to delivery of the nucleocapsid into the cytoplasm. In terms of biological role, the envelope glycoprotein gp160 precursor down-modulates cell surface CD4 antigen by interacting with it in the endoplasmic reticulum and blocking its transport to the cell surface. The gp120-gp41 heterodimer seems to contribute to T-cell depletion during HIV-1 infection. The envelope glycoproteins expressed on the surface of infected cells induce apoptosis through an interaction with uninfected cells expressing the receptor (CD4) and the coreceptors CXCR4 or CCR5. This type of bystander killing may be obtained by at least three distinct mechanisms. First, the interaction between the 2 cells can induce cellular fusion followed by nuclear fusion within the syncytium. Syncytia are condemned to die from apoptosis. Second, the 2 interacting cells may not fuse entirely and simply exchange plasma membrane lipids, after a sort of hemifusion process, followed by rapid death. Third, it is possible that virus-infected cells, on the point of undergoing apoptosis, fuse with CD4-expressing cells, in which case apoptosis is rapidly transmitted from one cell to the other and thus occurs in a sort of contagious fashion. Functionally, the gp120-gp41 heterodimer allows rapid transcytosis of the virus through CD4 negative cells such as simple epithelial monolayers of the intestinal, rectal and endocervical epithelial barriers. Both gp120 and gp41 specifically recognize glycosphingolipids galactosyl-ceramide (GalCer) or 3' sulfo-galactosyl-ceramide (GalS) present in the lipid rafts structures of epithelial cells. Binding to these alternative receptors allows the rapid transcytosis of the virus through the epithelial cells. This transcytotic vesicle-mediated transport of virions from the apical side to the basolateral side of the epithelial cells does not involve infection of the cells themselves. The chain is Envelope glycoprotein gp160 (env) from Homo sapiens (Human).